The primary structure comprises 222 residues: Thymidylate kinase (222 aa).

Position 7 to 14 (7 to 14 (GIDGAGKS)) interacts with ATP.

It belongs to the thymidylate kinase family.

The enzyme catalyses dTMP + ATP = dTDP + ADP. In terms of biological role, phosphorylation of dTMP to form dTDP in both de novo and salvage pathways of dTTP synthesis. This chain is Thymidylate kinase, found in Chlorobium chlorochromatii (strain CaD3).